Consider the following 111-residue polypeptide: Iron-sulfur cluster assembly protein CyaY (111 aa).

The protein belongs to the frataxin family.

Its function is as follows. Involved in iron-sulfur (Fe-S) cluster assembly. May act as a regulator of Fe-S biogenesis. The protein is Iron-sulfur cluster assembly protein CyaY of Cupriavidus metallidurans (strain ATCC 43123 / DSM 2839 / NBRC 102507 / CH34) (Ralstonia metallidurans).